We begin with the raw amino-acid sequence, 225 residues long: Cytochrome b6-f complex iron-sulfur subunit, chloroplastic (225 aa).

The N-terminal 46 residues, 1-46, are a transit peptide targeting the chloroplast; it reads MASTALSTASNPTQLCRSRASLGKPVKGLGFGRERVPRTATTITCQ. A helical transmembrane segment spans residues 69-89; sequence LLGAISLPTVGMLVPYGAFFI. In terms of domain architecture, Rieske spans 112–208; it reads AEEWLKTHGP…ADVDDGKVLF (97 aa). Residues cysteine 154, histidine 156, cysteine 172, and histidine 175 each coordinate [2Fe-2S] cluster. Residues cysteine 159 and cysteine 174 are joined by a disulfide bond.

It belongs to the Rieske iron-sulfur protein family. As to quaternary structure, the 4 large subunits of the cytochrome b6-f complex are cytochrome b6, subunit IV (17 kDa polypeptide, petD), cytochrome f and the Rieske protein, while the 4 small subunits are petG, petL, petM and petN. The complex functions as a dimer. [2Fe-2S] cluster is required as a cofactor.

Its subcellular location is the plastid. The protein resides in the chloroplast thylakoid membrane. It catalyses the reaction 2 oxidized [plastocyanin] + a plastoquinol + 2 H(+)(in) = 2 reduced [plastocyanin] + a plastoquinone + 4 H(+)(out). In terms of biological role, component of the cytochrome b6-f complex, which mediates electron transfer between photosystem II (PSII) and photosystem I (PSI), cyclic electron flow around PSI, and state transitions. This is Cytochrome b6-f complex iron-sulfur subunit, chloroplastic (petC) from Oryza sativa subsp. japonica (Rice).